The chain runs to 235 residues: C-type lectin domain family 2 member D-related protein (235 aa).

Residues 1–50 (MPSSAHLQDPPPHLSRTLTQDEEQTSLRQSSSCGPSTTSASASESLSGST) form a disordered region. Residues 1 to 75 (MPSSAHLQDP…KIIPTESAAK (75 aa)) lie on the Cytoplasmic side of the membrane. Low complexity predominate over residues 30–50 (SSSCGPSTTSASASESLSGST). The helical; Signal-anchor for type II membrane protein transmembrane segment at 76 to 96 (LLCCYAVFMALTVVVIALSIA) threads the bilayer. Over 97-235 (LSVKKTPQIS…KLNSYTSQCP (139 aa)) the chain is Extracellular. The 112-residue stretch at 121–232 (FGNKCYYFNE…ICSKLNSYTS (112 aa)) folds into the C-type lectin domain. N-linked (GlcNAc...) asparagine glycosylation occurs at asparagine 134.

It localises to the cell membrane. Its function is as follows. Lectin-type cell surface receptor. The sequence is that of C-type lectin domain family 2 member D-related protein from Rattus norvegicus (Rat).